We begin with the raw amino-acid sequence, 205 residues long: Heat shock protein beta-1 (205 aa).

Position 12 is an omega-N-methylarginine (R12). S15 bears the Phosphoserine; by MAPKAPK2 and MAPKAPK3 mark. A phosphoserine mark is found at S26 and S65. An interaction with TGFB1I1 region spans residues 70 to 205 (APAYSRALSR…AAKSDETAAK (136 aa)). In terms of domain architecture, sHSP spans 76 to 184 (ALSRQLSSGV…QSNEITIPVT (109 aa)). Phosphoserine; by MAPKAPK2, MAPKAPK3 and MAPKAPK5 is present on residues S78 and S82. S83, S86, and S98 each carry phosphoserine. An N6-acetyllysine modification is found at K123. At T174 the chain carries Phosphothreonine. A phosphoserine mark is found at S176 and S199.

The protein belongs to the small heat shock protein (HSP20) family. As to quaternary structure, homooligomer. Homodimer; becomes monomeric upon activation. Heterooligomer; with HSPB6. Associates with alpha- and beta-tubulin. Interacts with TGFB1I1. Interacts with CRYAB. Interacts with HSPB8. Interacts with HSPBAP1. In terms of processing, phosphorylated upon exposure to protein kinase C activators and heat shock. Phosphorylation by MAPKAPK2 and MAPKAPK3 in response to stress dissociates HSPB1 from large small heat-shock protein (sHsps) oligomers and impairs its chaperone activity and ability to protect against oxidative stress effectively. Phosphorylation by MAPKAPK5 in response to PKA stimulation induces F-actin rearrangement. As to expression, detected in all tissues tested: skeletal muscle, heart, aorta, large intestine, small intestine, stomach, esophagus, bladder, adrenal gland, thyroid, pancreas, testis, adipose tissue, kidney, liver, spleen, cerebral cortex, blood serum and cerebrospinal fluid. Highest levels are found in the heart and in tissues composed of striated and smooth muscle.

The protein localises to the cytoplasm. It is found in the nucleus. The protein resides in the cytoskeleton. Its subcellular location is the spindle. Small heat shock protein which functions as a molecular chaperone probably maintaining denatured proteins in a folding-competent state. Plays a role in stress resistance and actin organization. Through its molecular chaperone activity may regulate numerous biological processes including the phosphorylation and the axonal transport of neurofilament proteins. The sequence is that of Heat shock protein beta-1 (HSPB1) from Homo sapiens (Human).